A 176-amino-acid polypeptide reads, in one-letter code: NAD(P)H-quinone oxidoreductase subunit J (176 aa).

It belongs to the complex I 30 kDa subunit family. NDH-1 can be composed of about 15 different subunits; different subcomplexes with different compositions have been identified which probably have different functions.

The protein localises to the cell inner membrane. The catalysed reaction is a plastoquinone + NADH + (n+1) H(+)(in) = a plastoquinol + NAD(+) + n H(+)(out). The enzyme catalyses a plastoquinone + NADPH + (n+1) H(+)(in) = a plastoquinol + NADP(+) + n H(+)(out). In terms of biological role, NDH-1 shuttles electrons from an unknown electron donor, via FMN and iron-sulfur (Fe-S) centers, to quinones in the respiratory and/or the photosynthetic chain. The immediate electron acceptor for the enzyme in this species is believed to be plastoquinone. Couples the redox reaction to proton translocation, and thus conserves the redox energy in a proton gradient. Cyanobacterial NDH-1 also plays a role in inorganic carbon-concentration. The sequence is that of NAD(P)H-quinone oxidoreductase subunit J from Gloeobacter violaceus (strain ATCC 29082 / PCC 7421).